Here is a 448-residue protein sequence, read N- to C-terminus: MGSKFHAFMYPWFGFGHMIPYLHLANKLAEKGHRVTFFLPKKAHKQLQPLNLFPDSIVFEPLTLPPVDGLPFGAETASDLPNSTKKPIFVAMDLLRDQIEAKVRALKPDLIFFDFVHWVPEMAEEFGIKSVNYQIISAACVAMVLAPRAELGFPPPDYPLSKVALRGHEANVCSLFANSHELFGLITKGLKNCDVVSIRTCVELEGKLCGFIEKECQKKLLLTGPMLPEPQNKSGKFLEDRWNHWLNGFEPGSVVFCAFGTQFFFEKDQFQEFCLGMELMGLPFLISVMPPKGSPTVQEALPKGFEERVKKHGIVWEGWLEQPLILSHPSVGCFVNHCGFGSMWESLVSDCQIVFIPQLADQVLITRLLTEELEVSVKVQREDSGWFSKEDLRDTVKSVMDIDSEIGNLVKRNHKKLKETLVSPGLLSGYADKFVEALEIEVNNTKFS.

Residues Thr261, 320-322, 337-345, and 359-362 contribute to the UDP-alpha-D-glucose site; these read LEQ, HCGFGSMWE, and LADQ.

Belongs to the UDP-glycosyltransferase family.

The chain is UDP-glycosyltransferase 79B5 (UGT79B5) from Arabidopsis thaliana (Mouse-ear cress).